Here is a 207-residue protein sequence, read N- to C-terminus: Ribosomal RNA large subunit methyltransferase E (207 aa).

Residues Gly-51, Trp-53, Asp-69, Asp-85, and Asp-108 each coordinate S-adenosyl-L-methionine. Lys-148 functions as the Proton acceptor in the catalytic mechanism.

The protein belongs to the class I-like SAM-binding methyltransferase superfamily. RNA methyltransferase RlmE family.

It is found in the cytoplasm. It catalyses the reaction uridine(2552) in 23S rRNA + S-adenosyl-L-methionine = 2'-O-methyluridine(2552) in 23S rRNA + S-adenosyl-L-homocysteine + H(+). Functionally, specifically methylates the uridine in position 2552 of 23S rRNA at the 2'-O position of the ribose in the fully assembled 50S ribosomal subunit. In Methanospirillum hungatei JF-1 (strain ATCC 27890 / DSM 864 / NBRC 100397 / JF-1), this protein is Ribosomal RNA large subunit methyltransferase E.